We begin with the raw amino-acid sequence, 472 residues long: Replicative helicase loading/DNA remodeling protein DnaB (472 aa).

The tract at residues 1–112 is DDBH1; the sequence is MADYWKDVLP…ERLFIYELLP (112 aa). The segment at 210–302 is DDBH2-1; that stretch reads DLFLAGLSET…VHLREGEQPA (93 aa). The DDBH2-2 stretch occupies residues 303–411; the sequence is EEDSLDGKLI…RQYLEWAEGK (109 aa). Residues 415-472 form a disordered region; it reads SKRNQKVIREEKLPDWMTEKETASDSESGQQKLHPQDLEEQKKKMMEEMQKLKKYSAY. Basic and acidic residues-rich tracts occupy residues 421 to 437 and 448 to 465; these read VIRE…KETA and HPQD…EMQK.

The protein belongs to the DnaB/DnaD family. Homotetramer. Also forms higher-order oligomers, can be induced by some ssDNA. The DNA replisome assembles sequentially on oriC in this order; DnaA, DnaD, DnaB, DnaI-DnaC helicase. In atomic force microscopy forms a square with a small central hole. Part of the replication restart primosome which assembles in this order; PriA, DnaD then DnaB. The preferred DNA substrate mimics an arrested DNA replication fork with unreplicated lagging strand. Interacts with DnaC, but probably not as a tetramer. Interacts with DnaD but no interaction with PriA was seen. Interacts with cell cycle regulator CcrZ. In terms of processing, in early growth phase only full-length protein is detected, during late growth and stationary phase full-length and C-terminally truncated proteins are seen (at protein level). Truncated protein is only seen in cytoplasmic fractions.

It localises to the cytoplasm. The protein resides in the cell membrane. Its function is as follows. Helps DnaI load the DnaC replicative helicase onto single-stranded (ss)DNA. During DNA replication from the origin of replication (oriC) in the DNA replisome, DnaD is required after DnaA, before DnaB and before subsequent helicase DnaC loading. Component of the replication restart primosome, which reloads the replicative helicase on sites other than oriC. DnaB, DnaD and DnaI may also be required for a PriA-independent pathway of replication fork restart. DnaB and DnaD work together to allow DnaB access to ssDNA. DNA replication at oriC might originate on the inner face of the cell membrane; DnaB is essential for both replication initiation and cell membrane attachment of the origin region of the chromosome and plasmids. Weakly binds ssDNA, preferentially binds double-stranded (ds)DNA, and replication fork-like substrates. Remodels DNA, laterally compacts supercoiled plasmid and linear DNA, forms beads along the dsDNA. Together DnaB and DnaD form bipolar complexes on plasmid DNA. DnaB and DnaD are also required to load helicase on the repN plasmid origin of replication (oriN). The polypeptide is Replicative helicase loading/DNA remodeling protein DnaB (Bacillus subtilis (strain 168)).